Here is a 312-residue protein sequence, read N- to C-terminus: Zinc finger protein 414 (312 aa).

Residues 1–110 form a disordered region; the sequence is MEEKPSGPIP…RRPPPGKQIP (110 aa). Positions 29–48 are enriched in low complexity; that stretch reads SPAVPAAAPSSSMSEEPGPE. The span at 84-93 shows a compositional bias: polar residues; that stretch reads GLTSIVSGTS. 3 C2H2-type zinc fingers span residues 109 to 133, 145 to 169, and 176 to 201; these read IPCS…LRTH, FRCS…SKLH, and FKCE…CAEH. The segment at 203-312 is disordered; that stretch reads QSPAPPPPPA…GSDAPSGACR (110 aa). Residues 213 to 225 are compositionally biased toward basic and acidic residues; that stretch reads LDREPPAPERPPE. Low complexity-rich tracts occupy residues 227 to 243 and 265 to 285; these read DPAS…EPFT and SPPR…SSAA.

Belongs to the krueppel C2H2-type zinc-finger protein family.

The protein localises to the nucleus. Functionally, may be involved in transcriptional regulation. This Homo sapiens (Human) protein is Zinc finger protein 414 (ZNF414).